Consider the following 340-residue polypeptide: Uroporphyrinogen decarboxylase (340 aa).

Substrate is bound by residues arginine 21–arginine 25, phenylalanine 40, aspartate 71, tyrosine 147, serine 202, and histidine 316.

This sequence belongs to the uroporphyrinogen decarboxylase family. In terms of assembly, homodimer.

It localises to the cytoplasm. It carries out the reaction uroporphyrinogen III + 4 H(+) = coproporphyrinogen III + 4 CO2. The protein operates within porphyrin-containing compound metabolism; protoporphyrin-IX biosynthesis; coproporphyrinogen-III from 5-aminolevulinate: step 4/4. Catalyzes the decarboxylation of four acetate groups of uroporphyrinogen-III to yield coproporphyrinogen-III. The polypeptide is Uroporphyrinogen decarboxylase (Wolinella succinogenes (strain ATCC 29543 / DSM 1740 / CCUG 13145 / JCM 31913 / LMG 7466 / NCTC 11488 / FDC 602W) (Vibrio succinogenes)).